Consider the following 284-residue polypeptide: Acetylglutamate kinase (284 aa).

Residues 66–67 (GG), Arg-88, and Asn-179 contribute to the substrate site.

It belongs to the acetylglutamate kinase family. ArgB subfamily.

Its subcellular location is the cytoplasm. The enzyme catalyses N-acetyl-L-glutamate + ATP = N-acetyl-L-glutamyl 5-phosphate + ADP. It functions in the pathway amino-acid biosynthesis; L-arginine biosynthesis; N(2)-acetyl-L-ornithine from L-glutamate: step 2/4. Its function is as follows. Catalyzes the ATP-dependent phosphorylation of N-acetyl-L-glutamate. The sequence is that of Acetylglutamate kinase from Actinobacillus pleuropneumoniae serotype 5b (strain L20).